Consider the following 416-residue polypeptide: RNA polymerase sigma-C factor (416 aa).

Positions 205–218 (DLVQEGTLGLERAV) match the Polymerase core binding motif. The segment at residues 374-393 (LAEIGRALDLSRERVRQIES) is a DNA-binding region (H-T-H motif).

Belongs to the sigma-70 factor family.

Functionally, sigma factors are initiation factors that promote the attachment of RNA polymerase to specific initiation sites and are then released. The chain is RNA polymerase sigma-C factor (sigC) from Nostoc sp. (strain PCC 7120 / SAG 25.82 / UTEX 2576).